The sequence spans 60 residues: Single-pass membrane and coiled-coil domain-containing protein 4 homolog (60 aa).

The tract at residues 1–22 (MRKLRGGQTRETRKQKQERREE) is disordered. Positions 8–22 (QTRETRKQKQERREE) are enriched in basic and acidic residues. Residues 8–34 (QTRETRKQKQERREENQKIQQQLKTIV) are a coiled coil. Residues 30-50 (LKTIVLPICGVVFLCIVAYVF) form a helical membrane-spanning segment.

It belongs to the SMCO4 family.

Its subcellular location is the membrane. This chain is Single-pass membrane and coiled-coil domain-containing protein 4 homolog, found in Culex quinquefasciatus (Southern house mosquito).